The primary structure comprises 237 residues: Ribosomal RNA small subunit methyltransferase G (237 aa).

Residues Gly-78, Phe-83, 129–130 (AE), and Arg-148 contribute to the S-adenosyl-L-methionine site.

The protein belongs to the methyltransferase superfamily. RNA methyltransferase RsmG family.

Its subcellular location is the cytoplasm. Its function is as follows. Specifically methylates the N7 position of a guanine in 16S rRNA. In Streptococcus pyogenes serotype M12 (strain MGAS2096), this protein is Ribosomal RNA small subunit methyltransferase G.